A 288-amino-acid polypeptide reads, in one-letter code: 4-hydroxybenzoate octaprenyltransferase (288 aa).

8 helical membrane-spanning segments follow: residues 23–43 (IGSLLLLWPTLWALWLAGRGI), 46–66 (AKILVVFVLGVFFMRAAGCVV), 98–118 (ILFVVLILLSFGLVLTLNSMT), 141–161 (LPQVVLGAAFGWSIPMGFAAV), 163–183 (ESLPLVCWLLLLANICWTVAY), 213–233 (LIIGLLQLATLLLMVAIGWLM), 234–254 (NLGGAFYWSILLAGALFTHQQ), and 268–288 (AFLNNNYVGLVLFLGILISYW).

This sequence belongs to the UbiA prenyltransferase family. It depends on Mg(2+) as a cofactor.

The protein localises to the cell inner membrane. It carries out the reaction all-trans-octaprenyl diphosphate + 4-hydroxybenzoate = 4-hydroxy-3-(all-trans-octaprenyl)benzoate + diphosphate. It functions in the pathway cofactor biosynthesis; ubiquinone biosynthesis. Catalyzes the prenylation of para-hydroxybenzoate (PHB) with an all-trans polyprenyl group. Mediates the second step in the final reaction sequence of ubiquinone-8 (UQ-8) biosynthesis, which is the condensation of the polyisoprenoid side chain with PHB, generating the first membrane-bound Q intermediate 3-octaprenyl-4-hydroxybenzoate. The chain is 4-hydroxybenzoate octaprenyltransferase from Yersinia pestis bv. Antiqua (strain Antiqua).